A 188-amino-acid chain; its full sequence is FMN-dependent NADPH-azoreductase (188 aa).

Belongs to the azoreductase type 2 family. As to quaternary structure, homotetramer. FMN is required as a cofactor.

Catalyzes the reductive cleavage of azo bond in aromatic azo compounds to the corresponding amines. Requires NADPH, but not NADH, as an electron donor for its activity. In Staphylococcus haemolyticus (strain JCSC1435), this protein is FMN-dependent NADPH-azoreductase (azo1).